The sequence spans 645 residues: Rab11 family-interacting protein 1 (645 aa).

A C2 domain is found at 1 to 128 (MSLAASAGRG…DQGRRKKQWY (128 aa)). Residues 171 to 187 (PFGKLKDKIKGKNKDSA) are compositionally biased toward basic and acidic residues. The tract at residues 171 to 215 (PFGKLKDKIKGKNKDSASDTASAIVPSVTPSVDSDDESFSKDKKK) is disordered. Phosphoserine occurs at positions 186, 204, 208, and 236. Residues 259 to 296 (WDDDAHEDESSSASDVMSHKRTSSTDQQPNQSNFSLPK) form a disordered region. The span at 282–293 (STDQQPNQSNFS) shows a compositional bias: polar residues. Phosphoserine is present on residues Ser301, Ser316, Ser340, Ser342, Ser344, Ser346, Ser357, Ser358, and Ser383. Residues 330–545 (PEARSEIRES…PRPHPVKPMN (216 aa)) are disordered. 2 stretches are compositionally biased toward basic and acidic residues: residues 378-391 (SDRR…KDSM) and 418-432 (AARE…ESKK). Residue Ser434 is modified to Phosphoserine. Basic and acidic residues predominate over residues 459 to 487 (SEKEKERKGALVEAQLREEDLMRRPEKDA). The region spanning 573-635 (KKYQPSDPAF…EETPNILRVP (63 aa)) is the FIP-RBD domain. Residues 581–645 (AFAYAQLTHD…AQMGKKAGKM (65 aa)) form a necessary for interaction with RAB4A and RAB11A, subcellular location and endosomal recycling region.

As to quaternary structure, homooligomer. Interacts with RAB11A, RAB11B, RAB25, RAB4A and RAB14.

It is found in the recycling endosome. Its subcellular location is the cytoplasmic vesicle. In terms of biological role, a Rab11 effector protein involved in the endosomal recycling process. Also involved in controlling membrane trafficking along the phagocytic pathway and in phagocytosis. Interaction with RAB14 may function in the process of neurite formation. This Mus musculus (Mouse) protein is Rab11 family-interacting protein 1 (Rab11fip1).